The following is a 447-amino-acid chain: MHTPSGPLPFYRSLYFQVITAIVIGVLLGHYWPETGTAMKPLGDGFIKLIKMIIAPIIFCTVVVGIAGMEDMKRVGKTGGLALLYFEVVSTLALLLGLLIVNLVQPGVGMHVDPATLDTKGIAAYTAPGKMQTTTEFLLAVIPTTVVDAFAKGEMLQVLLFSVMFGFALHQFGGRGTLVFDFIEKTSHVLFAIVGFIMKVAPIGAFGAMAFTIGKYGLGSLIPLAKLMGTFYATCLVFIFGVLGLIAKAHGFSIWKFIKYIKEELLIVLGTSSSESVLPRMMAKLENLGVRKSTVGLVVPTGYSFNLDGTSIYLTMAAVFIAQATDTPMTLTQQLTLLAVLLLTSKGAAGVTGSGFIVLAATLSAVGGVPVAGLALILGIDRFMSEARALTNLIGNGVATVVVGKWTGDLDEKQMRYHLDRETEAEANEPEAVLDEIDQHMPVPAAR.

A run of 9 helical transmembrane segments spans residues 13 to 33 (SLYF…HYWP), 49 to 69 (LIKM…IAGM), 81 to 101 (LALL…LLIV), 149 to 169 (AFAK…GFAL), 189 to 209 (VLFA…FGAM), 227 to 247 (LMGT…GLIA), 302 to 322 (GYSF…VFIA), 336 to 356 (TLLA…GSGF), and 357 to 377 (IVLA…LALI). Positions 422–447 (ETEAEANEPEAVLDEIDQHMPVPAAR) are disordered. Residues 425–436 (AEANEPEAVLDE) are compositionally biased toward acidic residues.

The protein belongs to the dicarboxylate/amino acid:cation symporter (DAACS) (TC 2.A.23) family.

The protein resides in the cell inner membrane. Functionally, responsible for the transport of dicarboxylates such as succinate, fumarate, and malate from the periplasm across the membrane. This is C4-dicarboxylate transport protein from Leptothrix cholodnii (strain ATCC 51168 / LMG 8142 / SP-6) (Leptothrix discophora (strain SP-6)).